The primary structure comprises 119 residues: Large ribosomal subunit protein bL20 (119 aa).

Belongs to the bacterial ribosomal protein bL20 family.

Binds directly to 23S ribosomal RNA and is necessary for the in vitro assembly process of the 50S ribosomal subunit. It is not involved in the protein synthesizing functions of that subunit. This Granulibacter bethesdensis (strain ATCC BAA-1260 / CGDNIH1) protein is Large ribosomal subunit protein bL20.